Here is a 356-residue protein sequence, read N- to C-terminus: MPLFKRRDVNTPAPTSSIREKYDFRDVLGTGAFSKVFLAESKTDVGQLYAVKCIDKKALKGKEESLENEIKVLRKLRHNNIVQLFETYDEKQFVYLVMELVTGGELFDRIVAKGSYTEQDASNLIRQVLEAVSFMHDNGVVHRDLKPENLLYYNQDEDSKIMISDFGLSKTEDSGVMATACGTPGYVAPEVLQQKPYGKAVDVWSIGVIAYILLCGYPPFYDESDANLFAQIIKGEYEFDAPYWDQISDSAKDFISHLMCCDPEMRFTCQSALEHPWISGNTAYTHDIHRTVAVHLKKSLAKRNWKKAFNAAAAIRQLQLLRLSPIATAFRNKRPNSNQRLQLPNVLVFQYFCKIP.

Positions 2–7 (PLFKRR) match the Nuclear localization signal motif. Residues 22-278 (YDFRDVLGTG…CQSALEHPWI (257 aa)) form the Protein kinase domain. ATP is bound by residues 28–36 (LGTGAFSKV) and Lys-52. Catalysis depends on Asp-144, which acts as the Proton acceptor. Thr-179 bears the Phosphothreonine; by ckk-1 mark. The interval 278 to 318 (ISGNTAYTHDIHRTVAVHLKKSLAKRNWKKAFNAAAAIRQL) is autoinhibitory domain. Residues 298 to 319 (KSLAKRNWKKAFNAAAAIRQLQ) are calmodulin-binding.

Belongs to the protein kinase superfamily. CAMK Ser/Thr protein kinase family. CaMK subfamily. The cofactor is Mg(2+).

The protein localises to the nucleus. Its subcellular location is the cytoplasm. The catalysed reaction is L-seryl-[protein] + ATP = O-phospho-L-seryl-[protein] + ADP + H(+). It catalyses the reaction L-threonyl-[protein] + ATP = O-phospho-L-threonyl-[protein] + ADP + H(+). Activated by Ca(2+)/calmodulin. Binding of calmodulin results in a conformational change that generates functional binding sites for both substrate and ATP, and thus relieves autoinhibition and lowers the Km of substrate binding. Must be phosphorylated by ckk-1 to be maximally active but this does not appear to be required for activity in AFD neurons. Its function is as follows. Calcium/calmodulin-dependent protein kinase that operates in the calcium-triggered CaMKK-CaMK1 signaling cascade which results in transcriptional activation. Transcriptional activation occurs at least in part through phosphorylation of crh-1. Regulates gene expression, sensory morphology, and function of the AFD thermosensory neurons. Involved in long-term adaptation of AFD neurons to temperatures warmer than the initial acclimatized cultivation temperature. Acts in the FLP thermal nociceptors to moderate the responsiveness to noxious heat and controls neuropeptide release from FLP neurons in response to temperature elevations. Regulates the dauer decision, the decision of the larvae to enter into the alternative stress-resistant and long-lived dauer developmental stage, based on the feeding state, primarily in the AWC sensory neurons. Acts non cell-autonomously in the AWC neurons to regulate expression of the daf-28 insulin-like peptide and cell-autonomously in the ASI sensory neurons to regulate expression of the growth promoting daf-7 in a food-regulated manner. Plays a role in memory-based thermal response of an individual AFD neuron cell. Involved in chemotaxis response in AWC neurons to attractant 2-heptanone, a volatile organic compound emitted by the nematode pathogenic bacterium B.nematocida B16. Represses transcription of glutamate receptor glr-1 in the nucleus basally and in response to change in synaptic activity. The sequence is that of Calcium/calmodulin-dependent protein kinase type 1 (cmk-1) from Caenorhabditis briggsae.